The sequence spans 370 residues: Phosphoserine aminotransferase (370 aa).

An N-acetylmethionine modification is found at Met1. His44 and Arg45 together coordinate O-phospho-L-serine. Position 51 is an N6-acetyllysine (Lys51). 3 residues coordinate pyridoxal 5'-phosphate: Gly79, Cys80, and Trp107. N6-acetyllysine is present on Lys127. Pyridoxal 5'-phosphate is bound by residues Thr156, Asp176, and Gln199. At Lys200 the chain carries N6-(pyridoxal phosphate)lysine. Residues Asn241 and Thr242 each contribute to the pyridoxal 5'-phosphate site. N6-acetyllysine occurs at positions 269, 318, and 323. Ser331 is modified (phosphoserine). An N6-acetyllysine modification is found at Lys333. 3 residues coordinate O-phospho-L-serine: His335, Arg336, and Arg342.

It belongs to the class-V pyridoxal-phosphate-dependent aminotransferase family. SerC subfamily. As to quaternary structure, homodimer. Pyridoxal 5'-phosphate serves as cofactor. In terms of tissue distribution, expressed at high levels in the brain, liver, kidney and pancreas, and very weakly expressed in the thymus, prostate, testis and colon.

It carries out the reaction O-phospho-L-serine + 2-oxoglutarate = 3-phosphooxypyruvate + L-glutamate. Its pathway is amino-acid biosynthesis; L-serine biosynthesis; L-serine from 3-phospho-D-glycerate: step 2/3. With respect to regulation, phosphoserine transaminase activity is strongly stimulated by increasing the ionic strength. In terms of biological role, involved in L-serine biosynthesis via the phosphorylated pathway, a three-step pathway converting the glycolytic intermediate 3-phospho-D-glycerate into L-serine. Catalyzes the second step, that is the pyridoxal 5'-phosphate-dependent transamination of 3-phosphohydroxypyruvate and L-glutamate to O-phosphoserine (OPS) and alpha-ketoglutarate. The polypeptide is Phosphoserine aminotransferase (Homo sapiens (Human)).